Here is a 37-residue protein sequence, read N- to C-terminus: Large ribosomal subunit protein bL36c (37 aa).

This sequence belongs to the bacterial ribosomal protein bL36 family.

The protein localises to the plastid. It localises to the chloroplast. This Chloranthus spicatus (Chulantree) protein is Large ribosomal subunit protein bL36c.